The following is a 261-amino-acid chain: tRNA pseudouridine synthase A (261 aa).

Catalysis depends on aspartate 52, which acts as the Nucleophile. Tyrosine 111 lines the substrate pocket.

It belongs to the tRNA pseudouridine synthase TruA family. In terms of assembly, homodimer.

The catalysed reaction is uridine(38/39/40) in tRNA = pseudouridine(38/39/40) in tRNA. Formation of pseudouridine at positions 38, 39 and 40 in the anticodon stem and loop of transfer RNAs. The polypeptide is tRNA pseudouridine synthase A (Jannaschia sp. (strain CCS1)).